The primary structure comprises 556 residues: Butanoate--CoA ligase AAE1 (556 aa).

A Microbody targeting signal motif is present at residues 554-556; the sequence is SKL.

The protein belongs to the ATP-dependent AMP-binding enzyme family. Expressed in roots, leaves, stems, flowers and developing seeds.

The protein localises to the peroxisome. The catalysed reaction is butanoate + ATP + CoA = butanoyl-CoA + AMP + diphosphate. It catalyses the reaction hexanoate + ATP + CoA = hexanoyl-CoA + AMP + diphosphate. The enzyme catalyses pentanoate + ATP + CoA = pentanoyl-CoA + AMP + diphosphate. It carries out the reaction 4-methylpentanoate + ATP + CoA = 4-methylpentanoyl-CoA + AMP + diphosphate. In terms of biological role, catalyzes the ligation of CoA on butanoate to produce butanoyl-CoA. Can also use hexanoate, pentanoate and 4-methylpentanoate as substrates with a lower efficiency. This is Butanoate--CoA ligase AAE1 from Arabidopsis thaliana (Mouse-ear cress).